A 306-amino-acid chain; its full sequence is Elongation factor Ts (306 aa).

Positions 80 to 83 are involved in Mg(2+) ion dislocation from EF-Tu; it reads TDFV.

It belongs to the EF-Ts family.

The protein resides in the cytoplasm. Associates with the EF-Tu.GDP complex and induces the exchange of GDP to GTP. It remains bound to the aminoacyl-tRNA.EF-Tu.GTP complex up to the GTP hydrolysis stage on the ribosome. The chain is Elongation factor Ts from Clostridium acetobutylicum (strain ATCC 824 / DSM 792 / JCM 1419 / IAM 19013 / LMG 5710 / NBRC 13948 / NRRL B-527 / VKM B-1787 / 2291 / W).